A 161-amino-acid polypeptide reads, in one-letter code: MEYNTSALCDLFADSVDVVEPMFVSFGGRASFGGEITTIKCFEDKGVILKALEKPGLGKVLLIDGGGSMRRALIDSAAAQIALDNGWEGIICYGSVREVDDLEEINVGVHAIASIPVSADDQGVGEVDVAVNFGGVTFLPEDHVYADRTGIILSPEPLDVE.

The protein belongs to the RraA family. Homotrimer. Binds to both RNA-binding sites in the C-terminal region of Rne and to RhlB.

Its subcellular location is the cytoplasm. Globally modulates RNA abundance by binding to RNase E (Rne) and regulating its endonucleolytic activity. Can modulate Rne action in a substrate-dependent manner by altering the composition of the degradosome. Modulates RNA-binding and helicase activities of the degradosome. This is Regulator of ribonuclease activity A from Pseudoalteromonas atlantica (strain T6c / ATCC BAA-1087).